We begin with the raw amino-acid sequence, 74 residues long: MNATIFAFLLLLNLAMHNATEQSSETDMDDTLLIPEINRGRCIEEGKWCPKKAPCCGRLECKGPSPKQKKCTRP.

Positions 1–19 (MNATIFAFLLLLNLAMHNA) are cleaved as a signal peptide. Residues 20 to 39 (TEQSSETDMDDTLLIPEINR) constitute a propeptide that is removed on maturation. 3 cysteine pairs are disulfide-bonded: Cys-42/Cys-56, Cys-49/Cys-61, and Cys-55/Cys-71.

The protein belongs to the neurotoxin 36 family. 01 subfamily. Expressed by the venom gland.

It is found in the secreted. In terms of biological role, probable ion channel inhibitor. The polypeptide is U4-theraphotoxin-Cg1a (Chilobrachys guangxiensis (Chinese earth tiger tarantula)).